The primary structure comprises 407 residues: Phosphopentomutase (407 aa).

Mn(2+) is bound by residues aspartate 11, aspartate 305, histidine 310, aspartate 346, histidine 347, and histidine 358.

The protein belongs to the phosphopentomutase family. Mn(2+) serves as cofactor.

The protein localises to the cytoplasm. It catalyses the reaction 2-deoxy-alpha-D-ribose 1-phosphate = 2-deoxy-D-ribose 5-phosphate. It carries out the reaction alpha-D-ribose 1-phosphate = D-ribose 5-phosphate. It participates in carbohydrate degradation; 2-deoxy-D-ribose 1-phosphate degradation; D-glyceraldehyde 3-phosphate and acetaldehyde from 2-deoxy-alpha-D-ribose 1-phosphate: step 1/2. In terms of biological role, isomerase that catalyzes the conversion of deoxy-ribose 1-phosphate (dRib-1-P) and ribose 1-phosphate (Rib-1-P) to deoxy-ribose 5-phosphate (dRib-5-P) and ribose 5-phosphate (Rib-5-P), respectively. This is Phosphopentomutase from Legionella pneumophila (strain Paris).